A 132-amino-acid polypeptide reads, in one-letter code: Telomere bouquet protein 1 (132 aa).

In terms of assembly, interacts with bqt2 and sad1. The bqt1-bqt2-sad1 complex binds rap1.

It localises to the cytoplasm. Its subcellular location is the cytoskeleton. The protein localises to the microtubule organizing center. The protein resides in the spindle pole body. It is found in the chromosome. It localises to the telomere. Involved in chromosome segregation. During meiotic prophase, connects telomeres to the spindle pole body by forming a bridge between the telomere protein rap1 and the spindle pole body protein sad1. This chain is Telomere bouquet protein 1 (bqt1), found in Schizosaccharomyces pombe (strain 972 / ATCC 24843) (Fission yeast).